Here is a 145-residue protein sequence, read N- to C-terminus: Putative pre-16S rRNA nuclease (145 aa).

Belongs to the YqgF nuclease family.

The protein localises to the cytoplasm. Functionally, could be a nuclease involved in processing of the 5'-end of pre-16S rRNA. The sequence is that of Putative pre-16S rRNA nuclease from Prochlorococcus marinus (strain MIT 9211).